A 491-amino-acid polypeptide reads, in one-letter code: UDP-N-acetylmuramate--L-alanine ligase (491 aa).

Position 126-132 (126-132) interacts with ATP; sequence GTHGKTT.

The protein belongs to the MurCDEF family.

Its subcellular location is the cytoplasm. It carries out the reaction UDP-N-acetyl-alpha-D-muramate + L-alanine + ATP = UDP-N-acetyl-alpha-D-muramoyl-L-alanine + ADP + phosphate + H(+). The protein operates within cell wall biogenesis; peptidoglycan biosynthesis. Its function is as follows. Cell wall formation. This is UDP-N-acetylmuramate--L-alanine ligase from Escherichia coli (strain K12 / MC4100 / BW2952).